We begin with the raw amino-acid sequence, 94 residues long: Co-chaperonin GroES (94 aa).

Belongs to the GroES chaperonin family. As to quaternary structure, heptamer of 7 subunits arranged in a ring. Interacts with the chaperonin GroEL.

The protein resides in the cytoplasm. Its function is as follows. Together with the chaperonin GroEL, plays an essential role in assisting protein folding. The GroEL-GroES system forms a nano-cage that allows encapsulation of the non-native substrate proteins and provides a physical environment optimized to promote and accelerate protein folding. GroES binds to the apical surface of the GroEL ring, thereby capping the opening of the GroEL channel. The protein is Co-chaperonin GroES of Parageobacillus thermoglucosidasius (Geobacillus thermoglucosidasius).